The following is a 568-amino-acid chain: Sulfite reductase [NADPH] hemoprotein beta-component (568 aa).

Residues Cys-425, Cys-431, Cys-470, and Cys-474 each coordinate [4Fe-4S] cluster. Position 474 (Cys-474) interacts with siroheme.

It belongs to the nitrite and sulfite reductase 4Fe-4S domain family. In terms of assembly, alpha(8)-beta(8). The alpha component is a flavoprotein, the beta component is a hemoprotein. The cofactor is siroheme. It depends on [4Fe-4S] cluster as a cofactor.

It carries out the reaction hydrogen sulfide + 3 NADP(+) + 3 H2O = sulfite + 3 NADPH + 4 H(+). It functions in the pathway sulfur metabolism; hydrogen sulfide biosynthesis; hydrogen sulfide from sulfite (NADPH route): step 1/1. Component of the sulfite reductase complex that catalyzes the 6-electron reduction of sulfite to sulfide. This is one of several activities required for the biosynthesis of L-cysteine from sulfate. The protein is Sulfite reductase [NADPH] hemoprotein beta-component of Xanthomonas campestris pv. campestris (strain ATCC 33913 / DSM 3586 / NCPPB 528 / LMG 568 / P 25).